A 591-amino-acid chain; its full sequence is Aspartate--tRNA(Asp/Asn) ligase (591 aa).

Glutamate 176 is a binding site for L-aspartate. The tract at residues 200–203 is aspartate; the sequence is QLFK. Arginine 222 provides a ligand contact to L-aspartate. Residues 222-224 and glutamine 231 contribute to the ATP site; that span reads RDE. Histidine 450 contributes to the L-aspartate binding site. Glutamate 484 contacts ATP. An L-aspartate-binding site is contributed by arginine 491. Position 536 to 539 (536 to 539) interacts with ATP; it reads GLDR.

This sequence belongs to the class-II aminoacyl-tRNA synthetase family. Type 1 subfamily. Homodimer.

The protein resides in the cytoplasm. It catalyses the reaction tRNA(Asx) + L-aspartate + ATP = L-aspartyl-tRNA(Asx) + AMP + diphosphate. In terms of biological role, aspartyl-tRNA synthetase with relaxed tRNA specificity since it is able to aspartylate not only its cognate tRNA(Asp) but also tRNA(Asn). Reaction proceeds in two steps: L-aspartate is first activated by ATP to form Asp-AMP and then transferred to the acceptor end of tRNA(Asp/Asn). The sequence is that of Aspartate--tRNA(Asp/Asn) ligase from Bacillus cereus (strain ATCC 14579 / DSM 31 / CCUG 7414 / JCM 2152 / NBRC 15305 / NCIMB 9373 / NCTC 2599 / NRRL B-3711).